Consider the following 138-residue polypeptide: 18 kDa antigen 2 (138 aa).

Residues 21–131 (GTRRPAVMPM…KPRRIEINHN (111 aa)) form the sHSP domain.

It belongs to the small heat shock protein (HSP20) family.

Not known. This protein is one of the major immune reactive proteins in mycobacteria. This chain is 18 kDa antigen 2, found in Mycobacterium avium.